A 223-amino-acid polypeptide reads, in one-letter code: Ribosome assembly factor mrt4 (223 aa).

The protein belongs to the universal ribosomal protein uL10 family. As to quaternary structure, associates with the pre-60S ribosomal particle.

Its subcellular location is the nucleus. It is found in the nucleolus. The protein resides in the cytoplasm. In terms of biological role, component of the ribosome assembly machinery. Nuclear paralog of the ribosomal protein P0, it binds pre-60S subunits at an early stage of assembly in the nucleolus, and is replaced by P0 in cytoplasmic pre-60S subunits and mature 80S ribosomes. In Dictyostelium discoideum (Social amoeba), this protein is Ribosome assembly factor mrt4.